The primary structure comprises 467 residues: Gamma-aminobutyric acid receptor subunit rho-3 (467 aa).

An N-terminal signal peptide occupies residues M1–A24. Residues S25–H266 are Extracellular-facing. Positions 111 and 175 each coordinate 4-aminobutanoate. An intrachain disulfide couples C184 to C198. A 4-aminobutanoate-binding site is contributed by E203. Residue N220 is glycosylated (N-linked (GlcNAc...) asparagine). The chain crosses the membrane as a helical span at residues V267–V287. Residues S288–R299 are Cytoplasmic-facing. The chain crosses the membrane as a helical span at residues V300–S320. Residues M321–D331 lie on the Extracellular side of the membrane. A helical transmembrane segment spans residues V332–N352. An interaction with SQSTM1 region spans residues E347 to R448. Residues Y353–Y446 are Cytoplasmic-facing. The chain crosses the membrane as a helical span at residues S447–V467.

It belongs to the ligand-gated ion channel (TC 1.A.9) family. Gamma-aminobutyric acid receptor (TC 1.A.9.5) subfamily. GABRR3 sub-subfamily. In terms of assembly, three rho subunits (rho-1/GBRR1, rho-2/GBRR2 and rho-3/GBRR3) coassemble either to form functional homopentamers or heteropentamers. Forms a ternary complex with SQSTM1 and PRKCZ.

It localises to the postsynaptic cell membrane. The protein localises to the cell membrane. The enzyme catalyses chloride(in) = chloride(out). With respect to regulation, inhibited by TPMPA, a rho-specific antagonist, when forming a homopentamer. In terms of biological role, rho subunit of the pentameric ligand-gated chloride channels responsible for mediating the effects of gamma-aminobutyric acid (GABA), the major inhibitory neurotransmitter in the brain. Rho-containing GABA-gated chloride channels are a subclass of GABA(A) receptors (GABAARs) entirely composed of rho subunits, where GABA molecules bind at the rho intersubunit interfaces. When activated by GABA, rho-GABAARs selectively allow the flow of chloride anions across the cell membrane down their electrochemical gradient. This chain is Gamma-aminobutyric acid receptor subunit rho-3, found in Homo sapiens (Human).